Consider the following 131-residue polypeptide: C-glycoside deglycosidase beta subunit (131 aa).

The protein belongs to the C-glycoside deglycosidase beta subunit family. Heterodimer composed of an alpha subunit (CarB1) and a beta subunit (CarC1). Mg(2+) serves as cofactor.

It catalyses the reaction 3''-dehydroisovitexin = 1,5-anhydro-D-erythro-hex-1-en-3-ulose + apigenin. With respect to regulation, activity is strongly reduced in the presence of chelating agents. Its function is as follows. Carbon-carbon bond-cleaving enzyme which participates in the metabolism of C-glycosides. Acts on the C6-glycosylated compound 3''-dehydroisovitexin (3''-oxo-isovitexin). Shows weak activity with 3''-dehydroisoorientin (3''-oxo-homoorientin) and 3'-dehydromangiferin (3'-oxo-mangiferin). The protein is C-glycoside deglycosidase beta subunit of Arthrobacter globiformis (strain ATCC 8010 / DSM 20124 / JCM 1332 / NBRC 12137 / NCIMB 8907 / NRRL B-2979 / 168).